A 60-amino-acid chain; its full sequence is Small ribosomal subunit protein eS31 (60 aa).

Zn(2+) is bound by residues C24, C27, C42, and C45. The C4-type zinc-finger motif lies at C24 to C45.

It belongs to the eukaryotic ribosomal protein eS31 family. In terms of assembly, part of the 30S ribosomal subunit. Zn(2+) serves as cofactor.

The sequence is that of Small ribosomal subunit protein eS31 from Methanopyrus kandleri (strain AV19 / DSM 6324 / JCM 9639 / NBRC 100938).